The sequence spans 105 residues: Small ribosomal subunit protein eS24 (105 aa).

The protein belongs to the eukaryotic ribosomal protein eS24 family.

The polypeptide is Small ribosomal subunit protein eS24 (Ignicoccus hospitalis (strain KIN4/I / DSM 18386 / JCM 14125)).